The primary structure comprises 271 residues: Ribosomal RNA small subunit methyltransferase A (271 aa).

His11, Leu13, Gly38, Glu58, Asp86, and Asn101 together coordinate S-adenosyl-L-methionine.

Belongs to the class I-like SAM-binding methyltransferase superfamily. rRNA adenine N(6)-methyltransferase family. RsmA subfamily.

The protein localises to the cytoplasm. The enzyme catalyses adenosine(1518)/adenosine(1519) in 16S rRNA + 4 S-adenosyl-L-methionine = N(6)-dimethyladenosine(1518)/N(6)-dimethyladenosine(1519) in 16S rRNA + 4 S-adenosyl-L-homocysteine + 4 H(+). In terms of biological role, specifically dimethylates two adjacent adenosines (A1518 and A1519) in the loop of a conserved hairpin near the 3'-end of 16S rRNA in the 30S particle. May play a critical role in biogenesis of 30S subunits. This Helicobacter pylori (strain P12) protein is Ribosomal RNA small subunit methyltransferase A.